The following is a 205-amino-acid chain: CASP-like protein 3A1 (205 aa).

Over 1–39 (MGIGMDSSTMSGPLVAHSGILDGDYEKRPAVCKMQMRFD) the chain is Cytoplasmic. A helical membrane pass occupies residues 40–60 (LANVGLRVLSLACSLVALVSM). At 61-89 (ASNQESGVVTVFGFKLPVYSKWSYSDSFE) the chain is on the extracellular side. Residues 90 to 110 (FLVGASAAAAAHSLLQLLLCG) form a helical membrane-spanning segment. At 111–125 (MKMVKRASTIPSRNH) the chain is on the cytoplasmic side. Residues 126–146 (AWLLFAGDQVFAYGMLAAASA) traverse the membrane as a helical segment. Residues 147–176 (AAGVTNLNRTGFRHSDLPNFCKPLHRFCDK) lie on the Extracellular side of the membrane. The N-linked (GlcNAc...) asparagine glycan is linked to Asn-154. Residues 177-197 (AAISIVFAFISSLILGGSAVL) form a helical membrane-spanning segment. Residues 198–205 (DVFWLSKN) lie on the Cytoplasmic side of the membrane.

It belongs to the Casparian strip membrane proteins (CASP) family. As to quaternary structure, homodimer and heterodimers.

Its subcellular location is the cell membrane. This chain is CASP-like protein 3A1, found in Picea sitchensis (Sitka spruce).